Consider the following 214-residue polypeptide: 3-demethoxyubiquinol 3-hydroxylase (214 aa).

6 residues coordinate Fe cation: Glu63, Glu93, His96, Glu145, Glu177, and His180.

Belongs to the COQ7 family. The cofactor is Fe cation.

It is found in the cell membrane. It catalyses the reaction a 5-methoxy-2-methyl-3-(all-trans-polyprenyl)benzene-1,4-diol + AH2 + O2 = a 3-demethylubiquinol + A + H2O. The protein operates within cofactor biosynthesis; ubiquinone biosynthesis. Functionally, catalyzes the hydroxylation of 2-nonaprenyl-3-methyl-6-methoxy-1,4-benzoquinol during ubiquinone biosynthesis. The polypeptide is 3-demethoxyubiquinol 3-hydroxylase (Nitrosococcus oceani (strain ATCC 19707 / BCRC 17464 / JCM 30415 / NCIMB 11848 / C-107)).